The sequence spans 205 residues: Probable GTP-binding protein EngB (205 aa).

The region spanning 8–195 is the EngB-type G domain; sequence RDAEVVLIGR…NEAVRHHLHE (188 aa). GTP is bound by residues 16-23, 41-45, 60-63, 140-143, and 175-177; these read GRSNVGKS, GVTRS, DLPG, NKMD, and ISA. Mg(2+) contacts are provided by S23 and T43.

This sequence belongs to the TRAFAC class TrmE-Era-EngA-EngB-Septin-like GTPase superfamily. EngB GTPase family. The cofactor is Mg(2+).

Its function is as follows. Necessary for normal cell division and for the maintenance of normal septation. The protein is Probable GTP-binding protein EngB of Haloarcula marismortui (strain ATCC 43049 / DSM 3752 / JCM 8966 / VKM B-1809) (Halobacterium marismortui).